The following is a 690-amino-acid chain: MKLPIAKRIPHPHELHGDVREDDYYWLKDRDNTEVIQYLEEENRYYHEIMRPLQEQTEQIYESMVDRVPDSEMKVPVQHGQFFYYSRLDKNKQYPIYARKQAASRALLQDATEEVVLDLNELAEEDDYLSVTVQRMTTDHSRLAYLENRDGTDRYTIYIKDLNTGELLSDRVPNVYIYGSMEWCRCGDYIFYTTVDEHQRPCQLWRHRLGSDVESDELIFEEKDDTFTLFISKSQSGKFIFVYSSSKTTSEIHMIDTDSPLSPLQLVDERRDGILYDVEHWEDDLLILTNEGALNFQLLRCPLNDLSSKVNVVEYNEERYLQEMYPFRDKLLIAGRENGLTQIWVVHDGELQQISWDEPLYTVAVLSEQSYDTNEVLIQYESLLTPKTTFGLNLQTGEKQCLQVAPVSGEYDRSQFRQEQLWATGRSGVKVPMTAVYLEGALDNGPAPLILYGYGSYGSNSDPRFDPYRLPLLEKGIVFVTAQVRGGSEMGRGWYEDGKMQNKRNTFTDFIAAAKHLIDQNYTSPTKMAARGGSAGGLLVGAVANMAGELFKVIVPAVPFVDVVTTMLDTSIPLTTLEWDEWGDPRKQEDYFYMKSYSPYDNVEAKDYPHMYITTGINDPRVGYFEPAKWVARLRAVKTDNNTLVMKTNMGAGHFGKSGRFNHLKEAAESYAFILDKLGVEAEEKVLNHR.

Active-site charge relay system residues include S534, D619, and H654.

It belongs to the peptidase S9A family.

The enzyme catalyses Hydrolysis of -Arg-|-Xaa- and -Lys-|-Xaa- bonds in oligopeptides, even when P1' residue is proline.. Its function is as follows. Cleaves peptide bonds on the C-terminal side of lysyl and argininyl residues. In Moraxella lacunata, this protein is Protease 2 (ptrB).